The chain runs to 314 residues: DNA-directed RNA polymerase subunit alpha (314 aa).

The alpha N-terminal domain (alpha-NTD) stretch occupies residues 1–228 (MIEIEKPKIE…EHLNIFVGLT (228 aa)). Residues 246-314 (EKVLEMTIEE…ELGLGLRKDD (69 aa)) are alpha C-terminal domain (alpha-CTD).

It belongs to the RNA polymerase alpha chain family. Homodimer. The RNAP catalytic core consists of 2 alpha, 1 beta, 1 beta' and 1 omega subunit. When a sigma factor is associated with the core the holoenzyme is formed, which can initiate transcription.

It catalyses the reaction RNA(n) + a ribonucleoside 5'-triphosphate = RNA(n+1) + diphosphate. In terms of biological role, DNA-dependent RNA polymerase catalyzes the transcription of DNA into RNA using the four ribonucleoside triphosphates as substrates. The protein is DNA-directed RNA polymerase subunit alpha of Bacillus cytotoxicus (strain DSM 22905 / CIP 110041 / 391-98 / NVH 391-98).